The following is a 457-amino-acid chain: Argininosuccinate lyase (457 aa).

It belongs to the lyase 1 family. Argininosuccinate lyase subfamily.

Its subcellular location is the cytoplasm. It catalyses the reaction 2-(N(omega)-L-arginino)succinate = fumarate + L-arginine. It functions in the pathway amino-acid biosynthesis; L-arginine biosynthesis; L-arginine from L-ornithine and carbamoyl phosphate: step 3/3. The chain is Argininosuccinate lyase from Escherichia coli O9:H4 (strain HS).